A 193-amino-acid polypeptide reads, in one-letter code: Ion-translocating oxidoreductase complex subunit B (193 aa).

A hydrophobic region spans residues 1–26; that stretch reads MSTMLIAVILLTLLALFFGVLLGFAA. One can recognise a 4Fe-4S domain in the interval 32-90; that stretch reads EGNPIVDELEAILPQTQCGQCGYPGCRPYAEAIANGDKVNKCPPGGTATMEKLASLMGV. Residues Cys49, Cys52, Cys57, Cys73, Cys114, Cys117, Cys120, Cys124, Cys144, Cys147, Cys150, and Cys154 each coordinate [4Fe-4S] cluster. 2 consecutive 4Fe-4S ferredoxin-type domains span residues 105-134 and 136-164; these read KVAY…GAGK and MHTV…MVPV.

This sequence belongs to the 4Fe4S bacterial-type ferredoxin family. RnfB subfamily. In terms of assembly, the complex is composed of six subunits: RnfA, RnfB, RnfC, RnfD, RnfE and RnfG. It depends on [4Fe-4S] cluster as a cofactor.

Its subcellular location is the cell inner membrane. In terms of biological role, part of a membrane-bound complex that couples electron transfer with translocation of ions across the membrane. This chain is Ion-translocating oxidoreductase complex subunit B, found in Shewanella oneidensis (strain ATCC 700550 / JCM 31522 / CIP 106686 / LMG 19005 / NCIMB 14063 / MR-1).